A 68-amino-acid polypeptide reads, in one-letter code: uncharacterized protein (68 aa).

An HMA domain is found at 2-67; that stretch reads KTITLNIKGI…VIEDAGFDAT (66 aa). Residues Cys13 and Cys16 each coordinate a metal cation.

This is an uncharacterized protein from Haemophilus influenzae (strain ATCC 51907 / DSM 11121 / KW20 / Rd).